Reading from the N-terminus, the 60-residue chain is Light-harvesting polypeptide B-885 alpha-2 chain (60 aa).

Topologically, residues 1–16 (SAPAQWKLWLVMDPRT) are cytoplasmic. A helical membrane pass occupies residues 17-37 (VMIGTAAWLGVLALLIHFLLL). Residue His-33 coordinates a bacteriochlorophyll. Residues 38–60 (GTERFNWIDTGLKEQKATAAAQA) lie on the Periplasmic side of the membrane.

This sequence belongs to the antenna complex alpha subunit family. The core complex is formed by different alpha and beta chains, binding bacteriochlorophyll molecules, and arranged most probably in tetrameric structures disposed around the reaction center. The non-pigmented gamma chains may constitute additional components.

It is found in the cell inner membrane. In terms of biological role, antenna complexes are light-harvesting systems, which transfer the excitation energy to the reaction centers. This is Light-harvesting polypeptide B-885 alpha-2 chain from Rhodocyclus tenuis (Rhodospirillum tenue).